Here is a 78-residue protein sequence, read N- to C-terminus: Large ribosomal subunit protein bL28 (78 aa).

The disordered stretch occupies residues 1–20 (MSQVCQVTGKRPVVGNNRSH).

The protein belongs to the bacterial ribosomal protein bL28 family.

The sequence is that of Large ribosomal subunit protein bL28 from Idiomarina loihiensis (strain ATCC BAA-735 / DSM 15497 / L2-TR).